The primary structure comprises 449 residues: Elongation factor 1-alpha (449 aa).

In terms of domain architecture, tr-type G spans 5-230 (KVHMNLVVVG…DMLEPPVRPS (226 aa)). A G1 region spans residues 14-21 (GHVDAGKS). Residue 14–21 (GHVDAGKS) coordinates GTP. Residues 70–74 (GITID) are G2. A G3 region spans residues 91 to 94 (DAPG). GTP contacts are provided by residues 91 to 95 (DAPGH) and 153 to 156 (NKMD). A G4 region spans residues 153–156 (NKMD). The tract at residues 194–196 (SGW) is G5. Glutamate 362 carries the 5-glutamyl glycerylphosphorylethanolamine modification.

This sequence belongs to the TRAFAC class translation factor GTPase superfamily. Classic translation factor GTPase family. EF-Tu/EF-1A subfamily. Post-translationally, phosphatidylethanolamine (PE) is a direct precursor of the ethanolamine-phosphoglycerol (EPG) moiety.

The protein resides in the cytoplasm. In terms of biological role, this protein promotes the GTP-dependent binding of aminoacyl-tRNA to the A-site of ribosomes during protein biosynthesis. The protein is Elongation factor 1-alpha (TEF1) of Trypanosoma brucei brucei.